A 281-amino-acid chain; its full sequence is 2-dehydro-3-deoxyphosphooctonate aldolase (281 aa).

Belongs to the KdsA family.

The protein localises to the cytoplasm. The catalysed reaction is D-arabinose 5-phosphate + phosphoenolpyruvate + H2O = 3-deoxy-alpha-D-manno-2-octulosonate-8-phosphate + phosphate. It participates in carbohydrate biosynthesis; 3-deoxy-D-manno-octulosonate biosynthesis; 3-deoxy-D-manno-octulosonate from D-ribulose 5-phosphate: step 2/3. Its pathway is bacterial outer membrane biogenesis; lipopolysaccharide biosynthesis. This chain is 2-dehydro-3-deoxyphosphooctonate aldolase, found in Pseudomonas fluorescens (strain SBW25).